Consider the following 134-residue polypeptide: uncharacterized protein (134 aa).

The protein belongs to the ycf68 family.

It is found in the plastid. The protein localises to the chloroplast. This is an uncharacterized protein from Saccharum hybrid (Sugarcane).